Reading from the N-terminus, the 436-residue chain is UPF0597 protein YhaM (436 aa).

This sequence belongs to the UPF0597 family.

This chain is UPF0597 protein YhaM, found in Shigella boydii serotype 4 (strain Sb227).